Consider the following 322-residue polypeptide: Probable cardiolipin synthase (CMP-forming) (322 aa).

A run of 3 helical transmembrane segments spans residues 143–163 (IGYVIVQGDFTLGMSLLAFAG), 199–219 (LVISLCYTDLLPMWLMGIVVF), and 289–309 (LQGLWYLTGLTTAATALSYVM).

This sequence belongs to the CDP-alcohol phosphatidyltransferase class-I family.

The protein resides in the mitochondrion inner membrane. It catalyses the reaction a CDP-1,2-diacyl-sn-glycerol + a 1,2-diacyl-sn-glycero-3-phospho-(1'-sn-glycerol) = a cardiolipin + CMP + H(+). Catalyzes the synthesis of cardiolipin (CL) (diphosphatidylglycerol) by specifically transferring a phosphatidyl group from CDP-diacylglycerol to phosphatidylglycerol (PG). CL is a key phospholipid in mitochondrial membranes and plays important roles in maintaining the functional integrity and dynamics of mitochondria under both optimal and stress conditions. The sequence is that of Probable cardiolipin synthase (CMP-forming) (CLS) from Drosophila melanogaster (Fruit fly).